The sequence spans 121 residues: Small ribosomal subunit protein uS13 (121 aa).

The segment at 94-121 (GLPVRGQKTRNNAHTVKGKPKAIAGKKK) is disordered. Residues 109 to 121 (VKGKPKAIAGKKK) are compositionally biased toward basic residues.

This sequence belongs to the universal ribosomal protein uS13 family. As to quaternary structure, part of the 30S ribosomal subunit. Forms a loose heterodimer with protein S19. Forms two bridges to the 50S subunit in the 70S ribosome.

Located at the top of the head of the 30S subunit, it contacts several helices of the 16S rRNA. In the 70S ribosome it contacts the 23S rRNA (bridge B1a) and protein L5 of the 50S subunit (bridge B1b), connecting the 2 subunits; these bridges are implicated in subunit movement. Contacts the tRNAs in the A and P-sites. The sequence is that of Small ribosomal subunit protein uS13 from Onion yellows phytoplasma (strain OY-M).